We begin with the raw amino-acid sequence, 54 residues long: UPF0391 membrane protein BMEI0373 (54 aa).

A run of 2 helical transmembrane segments spans residues 5 to 25 and 29 to 48; these read VLVF…GIAG and GIAQ…SLIA.

This sequence belongs to the UPF0391 family.

It localises to the cell membrane. The chain is UPF0391 membrane protein BMEI0373 from Brucella melitensis biotype 1 (strain ATCC 23456 / CCUG 17765 / NCTC 10094 / 16M).